Consider the following 425-residue polypeptide: Protein CLP1 homolog (425 aa).

Residues glutamate 18, lysine 59, and 121–126 (DVGKST) each bind ATP.

This sequence belongs to the Clp1 family. Clp1 subfamily.

The protein resides in the nucleus. In terms of biological role, required for endonucleolytic cleavage during polyadenylation-dependent pre-mRNA 3'-end formation. The chain is Protein CLP1 homolog (cbc) from Drosophila mojavensis (Fruit fly).